A 128-amino-acid polypeptide reads, in one-letter code: Transcription antitermination protein NusB (128 aa).

This sequence belongs to the NusB family.

Functionally, involved in transcription antitermination. Required for transcription of ribosomal RNA (rRNA) genes. Binds specifically to the boxA antiterminator sequence of the ribosomal RNA (rrn) operons. The polypeptide is Transcription antitermination protein NusB (Listeria monocytogenes serotype 4b (strain CLIP80459)).